The sequence spans 333 residues: Holliday junction branch migration complex subunit RuvB (333 aa).

Positions 1–182 (MEERIVSAEA…FGVMARLEYY (182 aa)) are large ATPase domain (RuvB-L). Residues leucine 21, arginine 22, glycine 63, lysine 66, threonine 67, threonine 68, 129–131 (EDF), arginine 172, tyrosine 182, and arginine 219 contribute to the ATP site. Threonine 67 is a binding site for Mg(2+). Residues 183 to 253 (KPEELAQIVE…RACSALEQLH (71 aa)) form a small ATPAse domain (RuvB-S) region. Residues 256–333 (PLGLDHIDDK…AHYGVEKQNG (78 aa)) are head domain (RuvB-H). Residues arginine 311 and arginine 316 each coordinate DNA.

It belongs to the RuvB family. In terms of assembly, homohexamer. Forms an RuvA(8)-RuvB(12)-Holliday junction (HJ) complex. HJ DNA is sandwiched between 2 RuvA tetramers; dsDNA enters through RuvA and exits via RuvB. An RuvB hexamer assembles on each DNA strand where it exits the tetramer. Each RuvB hexamer is contacted by two RuvA subunits (via domain III) on 2 adjacent RuvB subunits; this complex drives branch migration. In the full resolvosome a probable DNA-RuvA(4)-RuvB(12)-RuvC(2) complex forms which resolves the HJ.

The protein resides in the cytoplasm. The catalysed reaction is ATP + H2O = ADP + phosphate + H(+). The RuvA-RuvB-RuvC complex processes Holliday junction (HJ) DNA during genetic recombination and DNA repair, while the RuvA-RuvB complex plays an important role in the rescue of blocked DNA replication forks via replication fork reversal (RFR). RuvA specifically binds to HJ cruciform DNA, conferring on it an open structure. The RuvB hexamer acts as an ATP-dependent pump, pulling dsDNA into and through the RuvAB complex. RuvB forms 2 homohexamers on either side of HJ DNA bound by 1 or 2 RuvA tetramers; 4 subunits per hexamer contact DNA at a time. Coordinated motions by a converter formed by DNA-disengaged RuvB subunits stimulates ATP hydrolysis and nucleotide exchange. Immobilization of the converter enables RuvB to convert the ATP-contained energy into a lever motion, pulling 2 nucleotides of DNA out of the RuvA tetramer per ATP hydrolyzed, thus driving DNA branch migration. The RuvB motors rotate together with the DNA substrate, which together with the progressing nucleotide cycle form the mechanistic basis for DNA recombination by continuous HJ branch migration. Branch migration allows RuvC to scan DNA until it finds its consensus sequence, where it cleaves and resolves cruciform DNA. The chain is Holliday junction branch migration complex subunit RuvB from Shouchella clausii (strain KSM-K16) (Alkalihalobacillus clausii).